The following is a 155-amino-acid chain: Endoribonuclease YbeY (155 aa).

3 residues coordinate Zn(2+): His-120, His-124, and His-130.

The protein belongs to the endoribonuclease YbeY family. It depends on Zn(2+) as a cofactor.

The protein localises to the cytoplasm. Its function is as follows. Single strand-specific metallo-endoribonuclease involved in late-stage 70S ribosome quality control and in maturation of the 3' terminus of the 16S rRNA. This is Endoribonuclease YbeY from Alkaliphilus metalliredigens (strain QYMF).